The chain runs to 319 residues: Ribosomal RNA small subunit methyltransferase H (319 aa).

S-adenosyl-L-methionine-binding positions include 37 to 39 (GGY), Asp57, Phe96, Asp105, and Gln112. Residues 292–302 (RPDEREKERNP) show a composition bias toward basic and acidic residues. Positions 292-319 (RPDEREKERNPRSRSARLRAVEKQGVPA) are disordered.

It belongs to the methyltransferase superfamily. RsmH family.

It is found in the cytoplasm. It catalyses the reaction cytidine(1402) in 16S rRNA + S-adenosyl-L-methionine = N(4)-methylcytidine(1402) in 16S rRNA + S-adenosyl-L-homocysteine + H(+). Its function is as follows. Specifically methylates the N4 position of cytidine in position 1402 (C1402) of 16S rRNA. The protein is Ribosomal RNA small subunit methyltransferase H of Syntrophobacter fumaroxidans (strain DSM 10017 / MPOB).